The sequence spans 187 residues: Cytochrome c oxidase assembly protein CtaG (187 aa).

Residues 1–9 (MSKKSNKNL) lie on the Cytoplasmic side of the membrane. A helical; Signal-anchor for type II membrane protein membrane pass occupies residues 10-30 (AFSLLGLIISMVLLSFASVPI). Residues 31 to 187 (YNLFCKVTGY…IASLRGNTKY (157 aa)) are Periplasmic-facing.

The protein belongs to the COX11/CtaG family.

The protein resides in the cell inner membrane. Exerts its effect at some terminal stage of cytochrome c oxidase synthesis, probably by being involved in the insertion of the copper B into subunit I. In Rickettsia felis (strain ATCC VR-1525 / URRWXCal2) (Rickettsia azadi), this protein is Cytochrome c oxidase assembly protein CtaG.